Consider the following 395-residue polypeptide: Na(+)/H(+) antiporter NhaA (395 aa).

The next 11 helical transmembrane spans lie at 11-31, 61-81, 96-116, 127-147, 156-176, 179-199, 215-237, 262-282, 295-315, 334-354, and 366-386; these read FQLE…ALII, LLLW…GLEV, IVLP…IYWF, GWAI…ALLG, LFLM…IAIF, GELS…LVAM, LILW…TLAF, VAYG…LSGV, IAVG…WLAV, VAIL…LAFV, and MGIL…TAAA.

This sequence belongs to the NhaA Na(+)/H(+) (TC 2.A.33) antiporter family.

Its subcellular location is the cell inner membrane. The catalysed reaction is Na(+)(in) + 2 H(+)(out) = Na(+)(out) + 2 H(+)(in). Its function is as follows. Na(+)/H(+) antiporter that extrudes sodium in exchange for external protons. The protein is Na(+)/H(+) antiporter NhaA of Pseudomonas fluorescens (strain Pf0-1).